The chain runs to 426 residues: Deoxyguanosinetriphosphate triphosphohydrolase-like protein (426 aa).

The disordered stretch occupies residues 1–23 (MYPYSESDAQRLHQEAPKASQLA). Positions 67 to 217 (RLTHSLEVAQ…MDFSDDIAYS (151 aa)) constitute an HD domain.

Belongs to the dGTPase family. Type 2 subfamily.

The chain is Deoxyguanosinetriphosphate triphosphohydrolase-like protein from Corynebacterium efficiens (strain DSM 44549 / YS-314 / AJ 12310 / JCM 11189 / NBRC 100395).